The following is a 514-amino-acid chain: 2,3-bisphosphoglycerate-independent phosphoglycerate mutase (514 aa).

Positions 14 and 64 each coordinate Mn(2+). S64 serves as the catalytic Phosphoserine intermediate. Substrate contacts are provided by residues H125, 155 to 156, R187, R193, 263 to 266, and K337; these read RD and RADR. Mn(2+) contacts are provided by D404, H408, D445, H446, and H463.

This sequence belongs to the BPG-independent phosphoglycerate mutase family. Monomer. Mn(2+) is required as a cofactor.

The catalysed reaction is (2R)-2-phosphoglycerate = (2R)-3-phosphoglycerate. It participates in carbohydrate degradation; glycolysis; pyruvate from D-glyceraldehyde 3-phosphate: step 3/5. In terms of biological role, catalyzes the interconversion of 2-phosphoglycerate and 3-phosphoglycerate. This chain is 2,3-bisphosphoglycerate-independent phosphoglycerate mutase, found in Hahella chejuensis (strain KCTC 2396).